Reading from the N-terminus, the 181-residue chain is Acireductone dioxygenase (181 aa).

Histidine 97, histidine 99, glutamate 103, and histidine 141 together coordinate Fe(2+). 4 residues coordinate Ni(2+): histidine 97, histidine 99, glutamate 103, and histidine 141.

It belongs to the acireductone dioxygenase (ARD) family. As to quaternary structure, monomer. The cofactor is Fe(2+). Ni(2+) serves as cofactor.

It carries out the reaction 1,2-dihydroxy-5-(methylsulfanyl)pent-1-en-3-one + O2 = 3-(methylsulfanyl)propanoate + CO + formate + 2 H(+). It catalyses the reaction 1,2-dihydroxy-5-(methylsulfanyl)pent-1-en-3-one + O2 = 4-methylsulfanyl-2-oxobutanoate + formate + 2 H(+). It functions in the pathway amino-acid biosynthesis; L-methionine biosynthesis via salvage pathway; L-methionine from S-methyl-5-thio-alpha-D-ribose 1-phosphate: step 5/6. In terms of biological role, catalyzes 2 different reactions between oxygen and the acireductone 1,2-dihydroxy-3-keto-5-methylthiopentene (DHK-MTPene) depending upon the metal bound in the active site. Fe-containing acireductone dioxygenase (Fe-ARD) produces formate and 2-keto-4-methylthiobutyrate (KMTB), the alpha-ketoacid precursor of methionine in the methionine recycle pathway. Ni-containing acireductone dioxygenase (Ni-ARD) produces methylthiopropionate, carbon monoxide and formate, and does not lie on the methionine recycle pathway. This is Acireductone dioxygenase from Pseudomonas aeruginosa (strain UCBPP-PA14).